The chain runs to 234 residues: Large ribosomal subunit protein uL1 (234 aa).

This sequence belongs to the universal ribosomal protein uL1 family. In terms of assembly, part of the 50S ribosomal subunit.

Its function is as follows. Binds directly to 23S rRNA. The L1 stalk is quite mobile in the ribosome, and is involved in E site tRNA release. Protein L1 is also a translational repressor protein, it controls the translation of the L11 operon by binding to its mRNA. The protein is Large ribosomal subunit protein uL1 of Anaeromyxobacter sp. (strain Fw109-5).